We begin with the raw amino-acid sequence, 631 residues long: Integrator complex subunit 10 (631 aa).

The segment covering 545–570 (FELTSSPNSSGTPTATTVAGGSQSRR) has biased composition (polar residues). Residues 545 to 577 (FELTSSPNSSGTPTATTVAGGSQSRRIGTRGAD) form a disordered region.

This sequence belongs to the Integrator subunit 10 family. Belongs to the multiprotein complex Integrator, at least composed of IntS1, IntS2, IntS3, IntS4, omd/IntS5, IntS6, defl/IntS7, IntS8, IntS9, IntS10, IntS11, IntS12, asun/IntS13, IntS14 and IntS15. The core complex associates with protein phosphatase 2A subunits mts/PP2A and Pp2A-29B, to form the Integrator-PP2A (INTAC) complex.

The protein localises to the nucleus. Component of the integrator complex, a multiprotein complex that terminates RNA polymerase II (Pol II) transcription in the promoter-proximal region of genes. The integrator complex provides a quality checkpoint during transcription elongation by driving premature transcription termination of transcripts that are unfavorably configured for transcriptional elongation: the complex terminates transcription by (1) catalyzing dephosphorylation of the C-terminal domain (CTD) of Pol II subunit Polr2A/Rbp1 and Spt5, and (2) degrading the exiting nascent RNA transcript via endonuclease activity. The integrator complex is also involved in the 3'-end processing of the U7 snRNA, and also the spliceosomal snRNAs U1, U2, U4 and U5. This Drosophila melanogaster (Fruit fly) protein is Integrator complex subunit 10.